We begin with the raw amino-acid sequence, 122 residues long: UPF0102 protein BQ09720 (122 aa).

It belongs to the UPF0102 family.

The protein is UPF0102 protein BQ09720 of Bartonella quintana (strain Toulouse) (Rochalimaea quintana).